A 143-amino-acid polypeptide reads, in one-letter code: Putative phosphotransferase IIA component SgcA (143 aa).

The region spanning 1 to 143 (MINDIKWVQA…DDALFALVSG (143 aa)) is the PTS EIIA type-2 domain. Residue H63 is the Tele-phosphohistidine intermediate of the active site.

It localises to the cytoplasm. The phosphoenolpyruvate-dependent sugar phosphotransferase system (sugar PTS), a major carbohydrate active -transport system, catalyzes the phosphorylation of incoming sugar substrates concomitantly with their translocation across the cell membrane. This is Putative phosphotransferase IIA component SgcA (sgcA) from Escherichia coli (strain K12).